Consider the following 243-residue polypeptide: Small ribosomal subunit protein uS3 (243 aa).

A KH type-2 domain is found at 39-110; sequence IRTFIQKKYG…QVRINVVEVE (72 aa). The interval 216–243 is disordered; sequence QTIPVGASPKRKASRRPQQFEDRSNENS. The span at 233-243 shows a compositional bias: basic and acidic residues; the sequence is QQFEDRSNENS.

It belongs to the universal ribosomal protein uS3 family. In terms of assembly, part of the 30S ribosomal subunit. Forms a tight complex with proteins S10 and S14.

In terms of biological role, binds the lower part of the 30S subunit head. Binds mRNA in the 70S ribosome, positioning it for translation. The protein is Small ribosomal subunit protein uS3 of Prochlorococcus marinus (strain AS9601).